A 302-amino-acid chain; its full sequence is 1,2-dihydroxynaphthalene dioxygenase (302 aa).

VOC domains are found at residues 9–124 and 149–270; these read ELGY…IFWG and GLGH…PGWR. His-152 provides a ligand contact to Fe cation. Substrate contacts are provided by residues His-152, 199–200, His-215, and Tyr-256; that span reads DH. A Fe cation-binding site is contributed by His-215. Glu-266 contributes to the Fe cation binding site.

Belongs to the extradiol ring-cleavage dioxygenase family. Fe(2+) serves as cofactor.

The enzyme catalyses naphthalene-1,2-diol + O2 = 2-hydroxychromene-2-carboxylate + H(+). Its pathway is aromatic compound metabolism; naphthalene degradation. Its activity is regulated as follows. Inhibited by bathophenanthroline sulfonate, o-phenanthroline, 8-hydroxyquinoline, 2,2'-dipyridyl and p-chlormercuribenzoate. Also inhibited by Hg(2+), Cu(2+), Co(2+) and Fe(3+) ions. Involved in the naphthalene catabolic pathway. Catalyzes the meta-cleavage of 1,2-dihydroxynaphthalene (1,2-DHN) to yield 2-hydroxychromene-2-carboxylic acid. Can also cleave 3-methylcatechol and 4-methylcatechol. The chain is 1,2-dihydroxynaphthalene dioxygenase (nahC) from Pseudomonas putida (Arthrobacter siderocapsulatus).